The following is a 260-amino-acid chain: Cytosolic Fe-S cluster assembly factor Nubp2 homolog (260 aa).

14 to 21 is an ATP binding site; it reads GKGGVGKS. [4Fe-4S] cluster is bound by residues cysteine 188 and cysteine 191.

The protein belongs to the Mrp/NBP35 ATP-binding proteins family. NUBP2/CFD1 subfamily. In terms of assembly, heterotetramer of 2 Nubp1 and 2 Nubp2 chains. The cofactor is [4Fe-4S] cluster.

It is found in the cytoplasm. Component of the cytosolic iron-sulfur (Fe/S) protein assembly (CIA) machinery. Required for maturation of extramitochondrial Fe-S proteins. The Nubp1-Nubp2 heterotetramer forms a Fe-S scaffold complex, mediating the de novo assembly of an Fe-S cluster and its transfer to target apoproteins. The sequence is that of Cytosolic Fe-S cluster assembly factor Nubp2 homolog from Drosophila melanogaster (Fruit fly).